Here is a 120-residue protein sequence, read N- to C-terminus: U3-hexatoxin-Hi1a (120 aa).

The first 19 residues, 1 to 19 (MKLLYFFVVITVLVAVAAA), serve as a signal peptide directing secretion. The propeptide occupies 20-51 (LPAKTEEQIAAEENQLVEDLVQYAGTRLTRKR).

Belongs to the neurotoxin 25 family. F7 subfamily. In terms of processing, contains 4 disulfide bonds. Expressed by the venom gland.

Its subcellular location is the secreted. Functionally, weak insecticidal toxin with probable ion channel impairing activity. In vivo, induces paralysis when injected into sheep blowflies (L.cuprina). Shows weak toxicity, since it is only toxic at high doses, and flies recover within 24 hours. The polypeptide is U3-hexatoxin-Hi1a (Hadronyche infensa (Fraser island funnel-web spider)).